We begin with the raw amino-acid sequence, 258 residues long: MLKARVIPCLDVKDGRVVKGVNFVDLVDAGDPVEQARLYDAAGADELTFLDITASSDNRETIYDVVRRTAEQVFMPLTVGGGVRTVEDIRRLLLAGADKVSINTAAVHRPDFVREGAEKFGSQCIVVAIDAKAVAPGPDGAPRWEVFTHGGRTPTGLDAVDWARRMAELGAGEILLTSMDRDGTKAGFDIGLTRAVADAVPVPVIASGGVGTLDHLVAGIRDGHATAVLAASIFHFGTFSVGQAKRHMAAAGIPMRLA.

Catalysis depends on residues aspartate 11 and aspartate 130.

This sequence belongs to the HisA/HisF family. In terms of assembly, heterodimer of HisH and HisF.

The protein resides in the cytoplasm. It carries out the reaction 5-[(5-phospho-1-deoxy-D-ribulos-1-ylimino)methylamino]-1-(5-phospho-beta-D-ribosyl)imidazole-4-carboxamide + L-glutamine = D-erythro-1-(imidazol-4-yl)glycerol 3-phosphate + 5-amino-1-(5-phospho-beta-D-ribosyl)imidazole-4-carboxamide + L-glutamate + H(+). It functions in the pathway amino-acid biosynthesis; L-histidine biosynthesis; L-histidine from 5-phospho-alpha-D-ribose 1-diphosphate: step 5/9. IGPS catalyzes the conversion of PRFAR and glutamine to IGP, AICAR and glutamate. The HisF subunit catalyzes the cyclization activity that produces IGP and AICAR from PRFAR using the ammonia provided by the HisH subunit. The sequence is that of Imidazole glycerol phosphate synthase subunit HisF from Rhodospirillum centenum (strain ATCC 51521 / SW).